The chain runs to 57 residues: Small ribosomal subunit protein bS21 (57 aa).

A disordered region spans residues R35 to F57. The segment covering V43–F57 has biased composition (basic residues).

This sequence belongs to the bacterial ribosomal protein bS21 family.

This Alkaliphilus metalliredigens (strain QYMF) protein is Small ribosomal subunit protein bS21.